The primary structure comprises 319 residues: GATA transcription factor 18 (319 aa).

The span at 1–15 (MPDAAAAAAAAQDAD) shows a compositional bias: low complexity. Residues 1-74 (MPDAAAAAAA…AAPEPVSALL (74 aa)) are disordered. Acidic residues predominate over residues 32 to 60 (NNDDDGDDGTEEDEEEDDDEEGDEEELPP). The Tify domain maps to 74–109 (LPGSPNQLTLLFQGEVYVFESVTPEKVQAVLLLLGS). The 43-residue stretch at 143 to 185 (RVASLIRFREKRKERNFDKKIRYAVRKEVALRMQRRKGQFAGR) folds into the CCT domain. The GATA-type zinc finger occupies 215-242 (CQNCGTSEKMTPAMRRGPAGPRTLCNAC). The disordered stretch occupies residues 292 to 319 (ITASHGEVMGDSTPANEAEIGAPKAQSQ).

The protein belongs to the type IV zinc-finger family. Class C subfamily.

The protein localises to the nucleus. In terms of biological role, transcriptional activator that specifically binds 5'-GATA-3' or 5'-GAT-3' motifs within gene promoters. This chain is GATA transcription factor 18, found in Oryza sativa subsp. indica (Rice).